The chain runs to 372 residues: Carbamoyl phosphate synthase small chain (372 aa).

Residues 1 to 179 (MRAILALEDG…ALVTGKTLPP (179 aa)) are CPSase. 3 residues coordinate L-glutamine: Ser45, Gly231, and Gly233. The region spanning 183–369 (DIVAFDFGIK…RKMIAASKRQ (187 aa)) is the Glutamine amidotransferase type-1 domain. Cys258 serves as the catalytic Nucleophile. L-glutamine is bound by residues Leu259, Gln262, Asn300, Gly302, and Phe303. Active-site residues include His342 and Glu344.

Belongs to the CarA family. As to quaternary structure, composed of two chains; the small (or glutamine) chain promotes the hydrolysis of glutamine to ammonia, which is used by the large (or ammonia) chain to synthesize carbamoyl phosphate. Tetramer of heterodimers (alpha,beta)4.

It catalyses the reaction hydrogencarbonate + L-glutamine + 2 ATP + H2O = carbamoyl phosphate + L-glutamate + 2 ADP + phosphate + 2 H(+). It carries out the reaction L-glutamine + H2O = L-glutamate + NH4(+). It participates in amino-acid biosynthesis; L-arginine biosynthesis; carbamoyl phosphate from bicarbonate: step 1/1. It functions in the pathway pyrimidine metabolism; UMP biosynthesis via de novo pathway; (S)-dihydroorotate from bicarbonate: step 1/3. Functionally, small subunit of the glutamine-dependent carbamoyl phosphate synthetase (CPSase). CPSase catalyzes the formation of carbamoyl phosphate from the ammonia moiety of glutamine, carbonate, and phosphate donated by ATP, constituting the first step of 2 biosynthetic pathways, one leading to arginine and/or urea and the other to pyrimidine nucleotides. The small subunit (glutamine amidotransferase) binds and cleaves glutamine to supply the large subunit with the substrate ammonia. The polypeptide is Carbamoyl phosphate synthase small chain (Akkermansia muciniphila (strain ATCC BAA-835 / DSM 22959 / JCM 33894 / BCRC 81048 / CCUG 64013 / CIP 107961 / Muc)).